The primary structure comprises 196 residues: Glycerol-3-phosphate acyltransferase (196 aa).

The next 4 helical transmembrane spans lie at 5-25 (GLIA…MILT), 70-90 (VVIA…LGAF), 111-131 (IGVL…IWLL), and 152-172 (LLLW…LTVL).

The protein belongs to the PlsY family. Probably interacts with PlsX.

It localises to the cell inner membrane. It carries out the reaction an acyl phosphate + sn-glycerol 3-phosphate = a 1-acyl-sn-glycero-3-phosphate + phosphate. The protein operates within lipid metabolism; phospholipid metabolism. In terms of biological role, catalyzes the transfer of an acyl group from acyl-phosphate (acyl-PO(4)) to glycerol-3-phosphate (G3P) to form lysophosphatidic acid (LPA). This enzyme utilizes acyl-phosphate as fatty acyl donor, but not acyl-CoA or acyl-ACP. This Nitrobacter winogradskyi (strain ATCC 25391 / DSM 10237 / CIP 104748 / NCIMB 11846 / Nb-255) protein is Glycerol-3-phosphate acyltransferase.